Consider the following 696-residue polypeptide: MPSLPVAAAEPMAVDESASKKSKRKLKAAEVEVEASSRKKEKKEKKRKAKEPSPSSSSSSEEEERSSTSSDEPAPAAKKAKKEKTKEKVVVEEEEEDDDEGELTASGDEDPADPNALANFRISESLREKLKSKGIKALFPIQATTFDLVLDGHDLVGRARTGQGKTLAFVLPILESLVNGTHKASRRTDYGRPPTVLVLLPTRELAKQVHTDFAFYGATFGLSACCVYGGSDYRSQEMAIRKGVDIVVGTPGRVKDFVEKGTLNFRSLKFRVLDEADEMLNMGFVDDVELILGKVEDVTKVQTLLFSATIPEWVKKLSLRFLKSGKKTVDLVGDEKLKASASVRHLALPCNRAARAQVIPDIIRCYSRGGRTIIFTETKESASDLSGLIAGSRALHGDVAQAQREVILAGFRSGKFLVLVATNVAARGLDINDVQLIIQCEPPRDVEAYIHRSGRTGRAGNTGVAVMLFEPRYKFNVNRIERESGVKFEHISAPQPTDVAQSAGTEAAEAISSVSDSVIPVFREQAEQLLNSSGMSAVDLLAKALAKAVGYTDIKKRSLLSSMDNHTTLLLQTGRSVYAAGFVLSTLKRFMPEERLADVKGITITADGTGAVFDVPSAEVEDYIQGAQNAAMVTVEEVKQLPPLQEREQSGGSRGGGRFGNRRFSGGGGGRGGGGRGFGGGRGRGGGGGNRFNKRY.

The disordered stretch occupies residues 1-116 (MPSLPVAAAE…GDEDPADPNA (116 aa)). Residues 16–97 (ESASKKSKRK…KVVVEEEEED (82 aa)) adopt a coiled-coil conformation. Positions 27–38 (KAAEVEVEASSR) are enriched in basic and acidic residues. Basic residues predominate over residues 39-49 (KKEKKEKKRKA). Low complexity predominate over residues 67–77 (STSSDEPAPAA). Residues 92-112 (EEEEEDDDEGELTASGDEDPA) show a composition bias toward acidic residues. The Q motif signature appears at 115-143 (NALANFRISESLREKLKSKGIKALFPIQA). One can recognise a Helicase ATP-binding domain in the interval 146 to 328 (FDLVLDGHDL…LRFLKSGKKT (183 aa)). Position 159–166 (159–166 (ARTGQGKT)) interacts with ATP. The DEAD box motif lies at 274 to 277 (DEAD). In terms of domain architecture, Helicase C-terminal spans 357–500 (QVIPDIIRCY…ISAPQPTDVA (144 aa)). The tract at residues 641–696 (LPPLQEREQSGGSRGGGRFGNRRFSGGGGGRGGGGRGFGGGRGRGGGGGNRFNKRY) is disordered. Gly residues predominate over residues 652 to 690 (GSRGGGRFGNRRFSGGGGGRGGGGRGFGGGRGRGGGGGN).

The protein belongs to the DEAD box helicase family. DDX21/DDX50 subfamily.

The protein resides in the nucleus. It carries out the reaction ATP + H2O = ADP + phosphate + H(+). In Oryza sativa subsp. japonica (Rice), this protein is DEAD-box ATP-dependent RNA helicase 7.